The sequence spans 83 residues: Small ribosomal subunit protein eS21 (83 aa).

This sequence belongs to the eukaryotic ribosomal protein eS21 family. In terms of assembly, component of the 40S small ribosomal subunit.

It is found in the cytoplasm. The protein localises to the cytosol. It localises to the rough endoplasmic reticulum. This chain is Small ribosomal subunit protein eS21 (RpS21), found in Agriotes lineatus (Lined click beetle).